A 565-amino-acid polypeptide reads, in one-letter code: Proline--tRNA ligase (565 aa).

It belongs to the class-II aminoacyl-tRNA synthetase family. ProS type 1 subfamily. In terms of assembly, homodimer.

It localises to the cytoplasm. It carries out the reaction tRNA(Pro) + L-proline + ATP = L-prolyl-tRNA(Pro) + AMP + diphosphate. Functionally, catalyzes the attachment of proline to tRNA(Pro) in a two-step reaction: proline is first activated by ATP to form Pro-AMP and then transferred to the acceptor end of tRNA(Pro). As ProRS can inadvertently accommodate and process non-cognate amino acids such as alanine and cysteine, to avoid such errors it has two additional distinct editing activities against alanine. One activity is designated as 'pretransfer' editing and involves the tRNA(Pro)-independent hydrolysis of activated Ala-AMP. The other activity is designated 'posttransfer' editing and involves deacylation of mischarged Ala-tRNA(Pro). The misacylated Cys-tRNA(Pro) is not edited by ProRS. The protein is Proline--tRNA ligase of Francisella tularensis subsp. tularensis (strain WY96-3418).